A 284-amino-acid polypeptide reads, in one-letter code: Shikimate dehydrogenase (NADP(+)) (284 aa).

Shikimate is bound by residues 20–22 and S67; that span reads SIS. The active-site Proton acceptor is K71. Position 83 (D83) interacts with NADP(+). Shikimate is bound by residues N92 and D107. NADP(+) is bound by residues 129-133 and I227; that span reads GAGGA. Y229 provides a ligand contact to shikimate. G250 serves as a coordination point for NADP(+).

The protein belongs to the shikimate dehydrogenase family. In terms of assembly, homodimer.

The catalysed reaction is shikimate + NADP(+) = 3-dehydroshikimate + NADPH + H(+). Its pathway is metabolic intermediate biosynthesis; chorismate biosynthesis; chorismate from D-erythrose 4-phosphate and phosphoenolpyruvate: step 4/7. Its function is as follows. Involved in the biosynthesis of the chorismate, which leads to the biosynthesis of aromatic amino acids. Catalyzes the reversible NADPH linked reduction of 3-dehydroshikimate (DHSA) to yield shikimate (SA). In Streptococcus pneumoniae (strain CGSP14), this protein is Shikimate dehydrogenase (NADP(+)).